A 274-amino-acid chain; its full sequence is Penicillin-insensitive murein endopeptidase (274 aa).

The N-terminal stretch at 1–19 (MKKTAIALLAWFVSSASLA) is a signal peptide. Intrachain disulfides connect Cys-44/Cys-265, Cys-187/Cys-235, and Cys-216/Cys-223. His-110, His-113, Asp-120, Asp-147, and His-150 together coordinate Zn(2+). The tract at residues 225 to 274 (DQPLPPPGDGCGAELQSWFEPPKPGTTKPEKKTPPPLPPSCQALLDEHVL) is disordered.

The protein belongs to the peptidase M74 family. As to quaternary structure, dimer. The cofactor is Zn(2+).

The protein resides in the periplasm. Functionally, murein endopeptidase that cleaves the D-alanyl-meso-2,6-diamino-pimelyl amide bond that connects peptidoglycan strands. Likely plays a role in the removal of murein from the sacculus. The polypeptide is Penicillin-insensitive murein endopeptidase (Salmonella paratyphi A (strain ATCC 9150 / SARB42)).